The sequence spans 1729 residues: 1,3-beta-glucan synthase component bgs1 (1729 aa).

Ser23 carries the phosphoserine modification. 6 helical membrane-spanning segments follow: residues 378–398 (WTACGLAGAIASFITLAAVVF), 416–436 (SMLLLISTLLLNIAPVVFIFA), 448–468 (LVVGIVHFFFSLVCVVYYSIT), 503–523 (FVSWCLWITVLVAKFLESYFF), 546–566 (YILGAGLCKAQPKILLSLLYL), and 577–597 (YLWYILISTIYSLAYAFCLGI). Ser784 and Ser788 each carry phosphoserine. The next 8 membrane-spanning stretches (helical) occupy residues 1180-1200 (MVIMFSLQLLMLVIINLGAMY), 1237-1257 (ILSIFIVFGIAFVPLAVCELG), 1337-1357 (MLLFGSITAWLPHYIYFWITL), 1440-1460 (YGEILGPLGTLFFTCIPFLFI), 1484-1504 (VAPLVLSAIIAFFFFCLGIML), 1515-1535 (YGVYLAGVAHFLFVCVDVVVF), 1550-1572 (LLGFVAIISIHRFAHKFFIICFL), and 1678-1698 (ATLYFSLFIAFFVLLILPFVF).

Belongs to the glycosyltransferase 48 family. As to quaternary structure, component of the 1,3-beta-glucan synthase (GS) complex, composed of at least the alternate catalytic subunits bgs1, bgs2, bgs3, and bgs4, and a regulatory subunit chr4.

Its subcellular location is the cell membrane. It localises to the cell septum. It catalyses the reaction [(1-&gt;3)-beta-D-glucosyl](n) + UDP-alpha-D-glucose = [(1-&gt;3)-beta-D-glucosyl](n+1) + UDP + H(+). Its function is as follows. Alternate catalytic subunit of the 1,3-beta-glucan synthase (GS) complex. Synthesizes 1,3-beta-glucan, a major structural component of the fungal cell wall. Required for the assembly of the division septum and maintenance of cell polarity. This Schizosaccharomyces pombe (strain 972 / ATCC 24843) (Fission yeast) protein is 1,3-beta-glucan synthase component bgs1 (bgs1).